A 422-amino-acid polypeptide reads, in one-letter code: Inhibitory synaptic factor 2A (422 aa).

Positions 143–163 (FLADSKEKSEAGPMEEPRPCS) are disordered. Residues 146–160 (DSKEKSEAGPMEEPR) show a composition bias toward basic and acidic residues. Position 177 is a phosphoserine (serine 177). The stretch at 344–370 (TEVVDLKAQLQVMENLISSSQETIKVL) forms a coiled coil.

This sequence belongs to the INSYN2 family. As to quaternary structure, interacts with GPHN.

The protein resides in the postsynaptic density. In terms of biological role, component of the protein machinery at the inhibitory synapses, probably acting as a scaffold. Inhibitory synapses dampen neuronal activity through postsynaptic hyperpolarization. This synaptic inhibition is fundamental for the functioning of the central nervous system, shaping and orchestrating the flow of information through neuronal networks to generate a precise neural code. This Mus musculus (Mouse) protein is Inhibitory synaptic factor 2A.